Consider the following 597-residue polypeptide: NADPH-dependent diflavin oxidoreductase 1 (597 aa).

Positions 6 to 150 (LLVLFGSQTG…AIDPWLQDLW (145 aa)) constitute a Flavodoxin-like domain. FMN-binding positions include 12–17 (SQTGTA), 59–62 (ATTG), 97–106 (LGDSSYAKFN), and D132. In terms of domain architecture, FAD-binding FR-type spans 206 to 446 (LQPFLAPMVS…WVRSGGLTFP (241 aa)). FAD is bound by residues R350, 382–385 (RAFS), and 416–419 (GLCS). NADP(+) is bound by residues T460, 515–516 (SR), 521–525 (KVYVQ), and D558. W596 contributes to the FAD binding site.

It belongs to the NADPH-dependent diflavin oxidoreductase NDOR1 family. This sequence in the N-terminal section; belongs to the flavodoxin family. In the C-terminal section; belongs to the flavoprotein pyridine nucleotide cytochrome reductase family. In terms of assembly, interacts with CIAPIN1; as part of the cytosolic iron-sulfur (Fe-S) protein assembly (CIA) machinery. Interacts with DCPS. The cofactor is FAD. FMN is required as a cofactor.

The protein localises to the cytoplasm. It localises to the perinuclear region. It catalyses the reaction 2 oxidized [2Fe-2S]-[protein] + NADPH = 2 reduced [2Fe-2S]-[protein] + NADP(+) + H(+). Functionally, NADPH-dependent reductase which is a central component of the cytosolic iron-sulfur (Fe-S) protein assembly (CIA) machinery. Transfers electrons from NADPH via its FAD and FMN prosthetic groups to the [2Fe-2S] cluster of CIAPIN1, another key component of the CIA machinery. In turn, this reduced cluster provides electrons for assembly of cytosolic iron-sulfur cluster proteins. It can also reduce the [2Fe-2S] cluster of CISD1 and activate this protein implicated in Fe/S cluster repair. In vitro can fully activate methionine synthase/MTR in the presence of soluble cytochrome b5/CYB5A. The chain is NADPH-dependent diflavin oxidoreductase 1 from Bos taurus (Bovine).